A 216-amino-acid polypeptide reads, in one-letter code: Large ribosomal subunit protein eL15 (216 aa).

Residues 170–188 are compositionally biased toward basic residues; the sequence is RGLRKSKGFKGTVKHKWSR. The disordered stretch occupies residues 170–201; the sequence is RGLRKSKGFKGTVKHKWSRKQKEREEKKRHEA. The segment covering 189–201 has biased composition (basic and acidic residues); that stretch reads KQKEREEKKRHEA.

This sequence belongs to the eukaryotic ribosomal protein eL15 family.

The polypeptide is Large ribosomal subunit protein eL15 (Saccharolobus islandicus (strain M.16.27) (Sulfolobus islandicus)).